The following is a 294-amino-acid chain: Cytidine deaminase (294 aa).

CMP/dCMP-type deaminase domains lie at 48 to 168 (DEDA…FGPK) and 186 to 294 (LTGD…VLLG). Residue 89–91 (NME) participates in substrate binding. H102 lines the Zn(2+) pocket. The active-site Proton donor is the E104. Residues C129 and C132 each coordinate Zn(2+).

This sequence belongs to the cytidine and deoxycytidylate deaminase family. In terms of assembly, homodimer. Requires Zn(2+) as cofactor.

The enzyme catalyses cytidine + H2O + H(+) = uridine + NH4(+). It carries out the reaction 2'-deoxycytidine + H2O + H(+) = 2'-deoxyuridine + NH4(+). Functionally, this enzyme scavenges exogenous and endogenous cytidine and 2'-deoxycytidine for UMP synthesis. The chain is Cytidine deaminase from Salmonella newport (strain SL254).